Reading from the N-terminus, the 235-residue chain is Ubiquinone/menaquinone biosynthesis C-methyltransferase UbiE (235 aa).

3 residues coordinate S-adenosyl-L-methionine: threonine 60, aspartate 81, and serine 126.

This sequence belongs to the class I-like SAM-binding methyltransferase superfamily. MenG/UbiE family.

It catalyses the reaction a 2-demethylmenaquinol + S-adenosyl-L-methionine = a menaquinol + S-adenosyl-L-homocysteine + H(+). It carries out the reaction a 2-methoxy-6-(all-trans-polyprenyl)benzene-1,4-diol + S-adenosyl-L-methionine = a 5-methoxy-2-methyl-3-(all-trans-polyprenyl)benzene-1,4-diol + S-adenosyl-L-homocysteine + H(+). It functions in the pathway quinol/quinone metabolism; menaquinone biosynthesis; menaquinol from 1,4-dihydroxy-2-naphthoate: step 2/2. The protein operates within cofactor biosynthesis; ubiquinone biosynthesis. Methyltransferase required for the conversion of demethylmenaquinol (DMKH2) to menaquinol (MKH2) and the conversion of 2-polyprenyl-6-methoxy-1,4-benzoquinol (DDMQH2) to 2-polyprenyl-3-methyl-6-methoxy-1,4-benzoquinol (DMQH2). The sequence is that of Ubiquinone/menaquinone biosynthesis C-methyltransferase UbiE from Geobacter sp. (strain M21).